A 506-amino-acid polypeptide reads, in one-letter code: MDKFQSYLGLDRSQQHYFLYPLIFQEYIYVLAHDHGLNRSILLENAGYDNKSSLLIVKRLITRMYQQNHLILSVNDSKQTPFLGHNKNFYLQVMSEVSSIIMEIPLSLRLISSLEKKGVVKSDNLRSIHSIFSFLEDNFLHLNYVLDIPIPYPAHLEILVQALRYWIKDASSLHLLRFFLHECHNWDSLITSNSKKASSSFSKRNHRLFFFLYTSHVCEYESGFIFLRNQSSHLRSTSSGALLERIYFYGKLEHLAEVFARAFQANLWLFKDPFMHYVRYQGKSILASKGTFLLMNKWKYYFVNFWKSYFYLWSEPGRIYINQLSNHSLDFLGYRSSVRLKPSMVRSQMLENAFLINNAIKKFDTIVPIMPLIGSLAKSKFCNTLGHPIGKVIWANLSDSDIIDRFGRIYRNLSHYHSGSSKKKSLYRVKYILRLSCARTLARKHKSTVRAFLKRFGSELLEEFFTEEEQVFSLTFPKVSSISRRLSRRRIWYLDIICINDLANHE.

This sequence belongs to the intron maturase 2 family. MatK subfamily.

The protein resides in the plastid. The protein localises to the chloroplast. In terms of biological role, usually encoded in the trnK tRNA gene intron. Probably assists in splicing its own and other chloroplast group II introns. The sequence is that of Maturase K from Jurinea cyanoides.